A 585-amino-acid chain; its full sequence is Neopullulanase 2 (585 aa).

The Ca(2+) site is built by Asn-143, Asp-145, Asn-148, Asp-149, Gly-169, and Asp-171. Substrate is bound by residues His-244 and Arg-323. Residue Asp-325 is the Nucleophile of the active site. The active-site Proton donor is the Glu-354. Substrate is bound by residues 420 to 421 (HD), Asp-465, and Arg-469.

This sequence belongs to the glycosyl hydrolase 13 family. Monomer. Ca(2+) is required as a cofactor.

The catalysed reaction is Hydrolysis of pullulan to panose (6-alpha-D-glucosylmaltose).. Its function is as follows. Hydrolyzes pullulan efficiently but only a small amount of starch. Endohydrolysis of 1,4-alpha-glucosidic linkages in pullulan to form panose. Also cleaves (1-6)-alpha-glucosidic linkages to form maltotriose. This is Neopullulanase 2 (tvaII) from Thermoactinomyces vulgaris.